The sequence spans 171 residues: Adenine phosphoribosyltransferase (171 aa).

Belongs to the purine/pyrimidine phosphoribosyltransferase family. As to quaternary structure, homodimer.

It is found in the cytoplasm. It carries out the reaction AMP + diphosphate = 5-phospho-alpha-D-ribose 1-diphosphate + adenine. The protein operates within purine metabolism; AMP biosynthesis via salvage pathway; AMP from adenine: step 1/1. Its function is as follows. Catalyzes a salvage reaction resulting in the formation of AMP, that is energically less costly than de novo synthesis. The protein is Adenine phosphoribosyltransferase of Syntrophotalea carbinolica (strain DSM 2380 / NBRC 103641 / GraBd1) (Pelobacter carbinolicus).